The sequence spans 293 residues: Iron-sulfur cluster transfer protein Nubpl (293 aa).

A CXXC motif probably involved in coordinating iron-sulfur cluster binding region spans residues 214–217 (CQNC).

It belongs to the Mrp/NBP35 ATP-binding proteins family. Homodimer; dimerization is not reliant on iron-sulfur cluster binding. [4Fe-4S] cluster serves as cofactor.

It localises to the mitochondrion membrane. Its function is as follows. Iron-sulfur cluster transfer protein involved in the assembly of the mitochondrial membrane respiratory chain NADH dehydrogenase (Complex I). May deliver one or more Fe-S clusters to complex I subunits. Alleviates pausing in mitochondrial DNA (mtDNA) replication at slow zone 2. May be involved in mtDNA-helicase-mediated mtDNA unwinding and replication by transferring iron-sulfur clusters. The polypeptide is Iron-sulfur cluster transfer protein Nubpl (Drosophila melanogaster (Fruit fly)).